We begin with the raw amino-acid sequence, 1143 residues long: DNA polymerase III subunit alpha (1143 aa).

This sequence belongs to the DNA polymerase type-C family. DnaE subfamily. As to quaternary structure, DNA polymerase III contains a core (composed of alpha, epsilon and theta chains) that associates with a tau subunit. This core dimerizes to form the PolIII' complex. PolIII' associates with the gamma complex (composed of gamma, delta, delta', psi and chi chains) and with the beta chain to form the complete DNA polymerase III complex.

It is found in the cytoplasm. The catalysed reaction is DNA(n) + a 2'-deoxyribonucleoside 5'-triphosphate = DNA(n+1) + diphosphate. In terms of biological role, DNA polymerase III is a complex, multichain enzyme responsible for most of the replicative synthesis in bacteria. This DNA polymerase also exhibits 3' to 5' exonuclease activity. The alpha chain is the DNA polymerase. In Caulobacter vibrioides (strain NA1000 / CB15N) (Caulobacter crescentus), this protein is DNA polymerase III subunit alpha (dnaE1).